The following is a 484-amino-acid chain: Probable glycine dehydrogenase (decarboxylating) subunit 2 (484 aa).

Position 270 is an N6-(pyridoxal phosphate)lysine (lysine 270).

This sequence belongs to the GcvP family. C-terminal subunit subfamily. In terms of assembly, the glycine cleavage system is composed of four proteins: P, T, L and H. In this organism, the P 'protein' is a heterodimer of two subunits. Requires pyridoxal 5'-phosphate as cofactor.

The catalysed reaction is N(6)-[(R)-lipoyl]-L-lysyl-[glycine-cleavage complex H protein] + glycine + H(+) = N(6)-[(R)-S(8)-aminomethyldihydrolipoyl]-L-lysyl-[glycine-cleavage complex H protein] + CO2. Its function is as follows. The glycine cleavage system catalyzes the degradation of glycine. The P protein binds the alpha-amino group of glycine through its pyridoxal phosphate cofactor; CO(2) is released and the remaining methylamine moiety is then transferred to the lipoamide cofactor of the H protein. This chain is Probable glycine dehydrogenase (decarboxylating) subunit 2, found in Desulforamulus reducens (strain ATCC BAA-1160 / DSM 100696 / MI-1) (Desulfotomaculum reducens).